Here is a 577-residue protein sequence, read N- to C-terminus: Arginine--tRNA ligase (577 aa).

Residues 124 to 132 carry the 'HIGH' region motif; the sequence is VAKEMHVGH.

The protein belongs to the class-I aminoacyl-tRNA synthetase family. In terms of assembly, monomer.

Its subcellular location is the cytoplasm. The enzyme catalyses tRNA(Arg) + L-arginine + ATP = L-arginyl-tRNA(Arg) + AMP + diphosphate. The protein is Arginine--tRNA ligase of Salmonella typhi.